Reading from the N-terminus, the 295-residue chain is MEFRQLRYFVAAAEEGNVGAAARRLHISQPPVTRQIHALEQHLGVLLFERSARGVQLTPAGAAFLEDARRMLELGRTSVDRSRAASRGEIGQLDIGYLGTAIYQTVPALLHAFTQAVPGATLSLALMPKVRQIEALRAGTIHLGVGRFYPQEPGITVEHLHYERLYIAAGSSIARQLRQDPTLLRLKSESLVLFPKEGRPSFADEVIALMRRAGVEPRVTAIVEDVNAALGLVAAGAGVTLVPASVAAIRRPFVRTMEMADASAKVPVSLTYLTDSRVPVLRAFLDVARRGKGQK.

Positions 1 to 58 constitute an HTH lysR-type domain; that stretch reads MEFRQLRYFVAAAEEGNVGAAARRLHISQPPVTRQIHALEQHLGVLLFERSARGVQLT. Residues 18–37 constitute a DNA-binding region (H-T-H motif); it reads VGAAARRLHISQPPVTRQIH.

It belongs to the LysR transcriptional regulatory family.

It is found in the cytoplasm. Functionally, involved in the regulation of 3-chlorocatechol degradation. Transcriptional regulator of tfdB expression. Acts as a repressor in the absence of its effector (either 2-cis-chlorodiene lactone or chloromaleylacetate) but acts as an activator when its effector is present. This is HTH-type transcriptional regulator TfdS (tfdS) from Cupriavidus pinatubonensis (strain JMP 134 / LMG 1197) (Cupriavidus necator (strain JMP 134)).